The following is a 185-amino-acid chain: CASP-like protein 5A1 (185 aa).

Over 1-48 (MNVSHPAVHPVGVPPALGGQAVPPRMRMRVRMEYLVFQGMPLPGSLGG) the chain is Cytoplasmic. A helical transmembrane segment spans residues 49–69 (LMLRLGQFCSALIAFSVMVSI). Residues 70-76 (RDFSVTA) lie on the Extracellular side of the membrane. Residues 77–97 (FCYLLAATVLQCLWSLALAVI) traverse the membrane as a helical segment. Topologically, residues 98–121 (DVYALLVKRSLRNPLLVSIFVVGD) are cytoplasmic. A helical transmembrane segment spans residues 122–142 (GVTATLTFAAACASAGVVVLI). Over 143–160 (GNDISMCKSNPCANYEAA) the chain is Extracellular. The helical transmembrane segment at 161-181 (IIMAFLSWFMVSISFVLTFWM) threads the bilayer. Over 182–185 (LATL) the chain is Cytoplasmic.

It belongs to the Casparian strip membrane proteins (CASP) family. In terms of assembly, homodimer and heterodimers.

Its subcellular location is the cell membrane. The protein is CASP-like protein 5A1 of Pinus contorta (Shore pine).